Here is a 320-residue protein sequence, read N- to C-terminus: Malate dehydrogenase (320 aa).

Residues 10–15 (GSGMIG) and Asp34 contribute to the NAD(+) site. Substrate-binding residues include Arg83 and Arg89. Residues Asn96 and 119 to 121 (ITN) each bind NAD(+). Substrate is bound by residues Asn121 and Arg152. His176 acts as the Proton acceptor in catalysis.

The protein belongs to the LDH/MDH superfamily. MDH type 3 family.

It catalyses the reaction (S)-malate + NAD(+) = oxaloacetate + NADH + H(+). Catalyzes the reversible oxidation of malate to oxaloacetate. This Rhizobium johnstonii (strain DSM 114642 / LMG 32736 / 3841) (Rhizobium leguminosarum bv. viciae) protein is Malate dehydrogenase.